A 641-amino-acid chain; its full sequence is Leucine-rich repeat receptor-like serine/threonine/tyrosine-protein kinase SOBIR1 (641 aa).

An N-terminal signal peptide occupies residues Met1 to Ser31. Residues Val32–Val284 lie on the Extracellular side of the membrane. LRR repeat units lie at residues Glu112–Ser133, Gln136–Ser159, Arg160–Arg182, Asn183–Phe205, and Asn207–Ser228. N-linked (GlcNAc...) asparagine glycosylation is present at Asn154. N-linked (GlcNAc...) asparagine glycosylation occurs at Asn186. The interval Ala243–Lys278 is disordered. Over residues Thr245 to Thr259 the composition is skewed to polar residues. N-linked (GlcNAc...) asparagine glycosylation occurs at Asn256. Low complexity predominate over residues Ser260–Pro269. A helical membrane pass occupies residues Ala285 to Phe305. Residues Ser306 to His641 lie on the Cytoplasmic side of the membrane. In terms of domain architecture, Protein kinase spans Leu347–His641. Residues Ile353–Val361 and Lys377 each bind ATP. The Proton acceptor role is filled by Asp489.

Belongs to the protein kinase superfamily. Ser/Thr protein kinase family. Interacts with CST. Interacts with RLP23. Component of a trimeric complex composed of RLP23, SOBIR1 and BAK1. BAK1 is recruited into a pre-formed RLP23-SOBIR1 complex in a ligand-dependent manner. Autophosphorylated on Ser, Thr and Tyr residues. Mostly present in leaves and flowers, with increasing expression in older flowers.

Its subcellular location is the cell membrane. It carries out the reaction L-seryl-[protein] + ATP = O-phospho-L-seryl-[protein] + ADP + H(+). It catalyses the reaction L-threonyl-[protein] + ATP = O-phospho-L-threonyl-[protein] + ADP + H(+). The catalysed reaction is L-tyrosyl-[protein] + ATP = O-phospho-L-tyrosyl-[protein] + ADP + H(+). Functionally, dual specificity kinase acting on both serine/threonine- and tyrosine-containing substrates. Acting as a counterplayer of BIR1, promotes the activation of plant defense and cell death. Component of the RLP23-SOBIR1-BAK1 complex that mediates NLP-triggered immunity. Functions as an inhibitor/regulator of abscission, probably by regulating membrane trafficking during abscission. The polypeptide is Leucine-rich repeat receptor-like serine/threonine/tyrosine-protein kinase SOBIR1 (SOBIR1) (Arabidopsis thaliana (Mouse-ear cress)).